Reading from the N-terminus, the 582-residue chain is 2-succinyl-5-enolpyruvyl-6-hydroxy-3-cyclohexene-1-carboxylate synthase (582 aa).

The protein belongs to the TPP enzyme family. MenD subfamily. In terms of assembly, homodimer. Requires Mg(2+) as cofactor. The cofactor is Mn(2+). It depends on thiamine diphosphate as a cofactor.

The enzyme catalyses isochorismate + 2-oxoglutarate + H(+) = 5-enolpyruvoyl-6-hydroxy-2-succinyl-cyclohex-3-ene-1-carboxylate + CO2. The protein operates within quinol/quinone metabolism; 1,4-dihydroxy-2-naphthoate biosynthesis; 1,4-dihydroxy-2-naphthoate from chorismate: step 2/7. Its pathway is cofactor biosynthesis; phylloquinone biosynthesis. Its function is as follows. Catalyzes the thiamine diphosphate-dependent decarboxylation of 2-oxoglutarate and the subsequent addition of the resulting succinic semialdehyde-thiamine pyrophosphate anion to isochorismate to yield 2-succinyl-5-enolpyruvyl-6-hydroxy-3-cyclohexene-1-carboxylate (SEPHCHC). This chain is 2-succinyl-5-enolpyruvyl-6-hydroxy-3-cyclohexene-1-carboxylate synthase, found in Prochlorococcus marinus (strain MIT 9313).